Consider the following 106-residue polypeptide: ATP-dependent Clp protease adapter protein ClpS (106 aa).

A disordered region spans residues 1–20 (MKVDMSTSVKDDAQLEASRV).

It belongs to the ClpS family. Binds to the N-terminal domain of the chaperone ClpA.

Its function is as follows. Involved in the modulation of the specificity of the ClpAP-mediated ATP-dependent protein degradation. The polypeptide is ATP-dependent Clp protease adapter protein ClpS (Chromobacterium violaceum (strain ATCC 12472 / DSM 30191 / JCM 1249 / CCUG 213 / NBRC 12614 / NCIMB 9131 / NCTC 9757 / MK)).